The primary structure comprises 117 residues: UPF0295 protein YgzB (117 aa).

2 consecutive transmembrane segments (helical) span residues 13-33 and 41-61; these read TFALSLVFVGFIIMYIGIFFK and LFMILGLLSIGLSTVVYFWIG.

This sequence belongs to the UPF0295 family.

The protein localises to the cell membrane. The polypeptide is UPF0295 protein YgzB (ygzB) (Bacillus subtilis (strain 168)).